The sequence spans 141 residues: Hemoglobin subunit alpha-D (141 aa).

One can recognise a Globin domain in the interval 1 to 141 (MLNHDEKQLI…VSAVLAEKYR (141 aa)). His-58 and His-87 together coordinate heme b.

The protein belongs to the globin family. Heterotetramer of two alpha-D chains and two beta chains. In terms of tissue distribution, red blood cells.

Functionally, involved in oxygen transport from the lung to the various peripheral tissues. The chain is Hemoglobin subunit alpha-D (HBAD) from Chrysemys picta bellii (Western painted turtle).